We begin with the raw amino-acid sequence, 463 residues long: Cysteine--tRNA ligase (463 aa).

C29 is a Zn(2+) binding site. Residues 31-41 carry the 'HIGH' region motif; that stretch reads PTVYNYAHIGN. 3 residues coordinate Zn(2+): C211, H236, and E240. A 'KMSKS' region motif is present at residues 269–273; the sequence is KMSKS. K272 contacts ATP.

It belongs to the class-I aminoacyl-tRNA synthetase family. Monomer. It depends on Zn(2+) as a cofactor.

The protein resides in the cytoplasm. It catalyses the reaction tRNA(Cys) + L-cysteine + ATP = L-cysteinyl-tRNA(Cys) + AMP + diphosphate. This chain is Cysteine--tRNA ligase, found in Caulobacter vibrioides (strain ATCC 19089 / CIP 103742 / CB 15) (Caulobacter crescentus).